A 312-amino-acid polypeptide reads, in one-letter code: Glyoxylate/hydroxypyruvate reductase A (312 aa).

The active site involves Arg-227. His-275 (proton donor) is an active-site residue.

Belongs to the D-isomer specific 2-hydroxyacid dehydrogenase family. GhrA subfamily.

The protein localises to the cytoplasm. It carries out the reaction glycolate + NADP(+) = glyoxylate + NADPH + H(+). It catalyses the reaction (R)-glycerate + NAD(+) = 3-hydroxypyruvate + NADH + H(+). The catalysed reaction is (R)-glycerate + NADP(+) = 3-hydroxypyruvate + NADPH + H(+). Functionally, catalyzes the NADPH-dependent reduction of glyoxylate and hydroxypyruvate into glycolate and glycerate, respectively. The chain is Glyoxylate/hydroxypyruvate reductase A from Salmonella paratyphi C (strain RKS4594).